The following is a 92-amino-acid chain: Small ribosomal subunit protein uS19 (92 aa).

This sequence belongs to the universal ribosomal protein uS19 family.

Functionally, protein S19 forms a complex with S13 that binds strongly to the 16S ribosomal RNA. In Staphylococcus aureus (strain Mu3 / ATCC 700698), this protein is Small ribosomal subunit protein uS19.